An 886-amino-acid chain; its full sequence is Extended synaptotagmin-3 (886 aa).

The tract at residues 1 to 21 (MRAEEPCAPGAPSALGAQRTP) is disordered. Topologically, residues 1 to 29 (MRAEEPCAPGAPSALGAQRTPGPELRLSS) are cytoplasmic. Helical transmembrane passes span 30-50 (QLLPELCTFVVRVLFYLGPVY) and 51-71 (LAGYLGLSITWLLLGALLWMW). The Cytoplasmic segment spans residues 72–886 (WRRNRRGKLG…ELTPNGQPRS (815 aa)). The 178-residue stretch at 114–291 (DVERVEWANK…LPNRVTVPVK (178 aa)) folds into the SMP-LTD domain. C2 domains lie at 291–408 (KKGL…DEWF) and 426–566 (SLLT…QLDH). Residues Lys321, Asp322, Asp332, Asp379, Glu380, Asp381, Asp383, Asp385, and Asp386 each contribute to the Ca(2+) site. A disordered region spans residues 613–673 (QGPKAQPQEE…PEPKGKDSAK (61 aa)). A compositionally biased stretch (low complexity) spans 642–659 (RSTTTTTSATTVATEPTS). Over residues 664–673 (PEPKGKDSAK) the composition is skewed to basic and acidic residues. The C2 3 domain maps to 754 to 876 (QLGEIQLTVR…DLIKGFSQWY (123 aa)). The tract at residues 801–808 (RKWACRKK) is required for phosphatidylinositol 4,5-bisphosphate-dependent location at the cell membrane.

Belongs to the extended synaptotagmin family. Interacts with ESYT1 and ESYT2. Widely expressed with high level in cerebellum and skin.

The protein localises to the cell membrane. Its subcellular location is the endoplasmic reticulum membrane. Binds glycerophospholipids in a barrel-like domain and may play a role in cellular lipid transport. Tethers the endoplasmic reticulum to the cell membrane and promotes the formation of appositions between the endoplasmic reticulum and the cell membrane. The chain is Extended synaptotagmin-3 from Homo sapiens (Human).